A 424-amino-acid chain; its full sequence is Histidine--tRNA ligase (424 aa).

The protein belongs to the class-II aminoacyl-tRNA synthetase family. In terms of assembly, homodimer.

It localises to the cytoplasm. It carries out the reaction tRNA(His) + L-histidine + ATP = L-histidyl-tRNA(His) + AMP + diphosphate + H(+). This is Histidine--tRNA ligase from Shigella dysenteriae serotype 1 (strain Sd197).